A 224-amino-acid polypeptide reads, in one-letter code: MGQKINPLGFRLGTTQNHHSFWFAQPKNYSEGLQEDKKIRNCIKNYIQKNRKKGSNRKMESDSSSEVITHIEIQKEIDTIHVIIHIGFPNLLKKKGAIEELEKDLQKEVNSVNQRLNIAIEKVKEPYRQPNILAEYIAFQLKNRVSFRKAMKKAIELTKKADIKGIKIQIAGRLAGKEIARAECIKKGRLPLQTIRAKIDYCCYPIRTIYGVLGVKIWIFVEEE.

The KH type-2 domain maps to 43–124 (IKNYIQKNRK…RLNIAIEKVK (82 aa)).

Belongs to the universal ribosomal protein uS3 family. As to quaternary structure, part of the 30S ribosomal subunit.

It localises to the plastid. It is found in the chloroplast. In Saccharum hybrid (Sugarcane), this protein is Small ribosomal subunit protein uS3c (rps3).